The chain runs to 255 residues: Probable transcriptional regulatory protein CMS0715 (255 aa).

This sequence belongs to the TACO1 family.

It is found in the cytoplasm. The sequence is that of Probable transcriptional regulatory protein CMS0715 from Clavibacter sepedonicus (Clavibacter michiganensis subsp. sepedonicus).